The primary structure comprises 295 residues: Giardin subunit alpha-1 (295 aa).

Annexin repeat units lie at residues 2–71 (PKVT…MDLF), 73–143 (DRHE…MEKW), 153–223 (GSPE…AHFA), and 226–293 (GMHR…TLWR).

The protein belongs to the annexin family. Giardin subunit alpha subfamily.

It is found in the cytoplasm. The protein localises to the cytoskeleton. In terms of biological role, giardins are involved in parasite attachment to the intestinal mucosa and in the cytoskeletal disassembly and reassembly that marks the transition from infectious trophozoite to transmissible cyst. They may interact with other cytoskeletal proteins such as microtubules in the microribbons or crossbridges, to maintain the integrity of the ventral disk. This Giardia intestinalis (Giardia lamblia) protein is Giardin subunit alpha-1.